The chain runs to 180 residues: Trafficking protein particle complex subunit 3 (180 aa).

Residue Cys-68 is the site of S-palmitoyl cysteine attachment.

The protein belongs to the TRAPP small subunits family. BET3 subfamily. Homodimer. Component of the multisubunit transport protein particle (TRAPP) complex, which includes at least TRAPPC2, TRAPPC2L, TRAPPC3, TRAPPC3L, TRAPPC4, TRAPPC5, TRAPPC8, TRAPPC9, TRAPPC10, TRAPPC11 and TRAPPC12. Heterodimer with TRAPPC6A. The heterodimer TRAPPC3-TRAPPC6A interacts with TRAPPC2L. Heterodimer with TRAPPC6b. The heterodimer TRAPPC6B-TRAPPC3 interacts with TRAPPC1 likely providing a core for TRAPP complex formation. Widely expressed. Expressed in lung, heart, liver, spleen, brain and kidney.

The protein resides in the golgi apparatus. It localises to the cis-Golgi network. Its subcellular location is the endoplasmic reticulum. May play a role in vesicular transport from endoplasmic reticulum to Golgi. The polypeptide is Trafficking protein particle complex subunit 3 (Mus musculus (Mouse)).